The chain runs to 70 residues: SPbeta prophage-derived uncharacterized protein YorZ (70 aa).

The polypeptide is SPbeta prophage-derived uncharacterized protein YorZ (yorZ) (Bacillus subtilis (strain 168)).